A 106-amino-acid polypeptide reads, in one-letter code: Iron-sulfur cluster assembly protein CyaY (106 aa).

It belongs to the frataxin family.

Functionally, involved in iron-sulfur (Fe-S) cluster assembly. May act as a regulator of Fe-S biogenesis. In Escherichia coli O9:H4 (strain HS), this protein is Iron-sulfur cluster assembly protein CyaY.